A 422-amino-acid chain; its full sequence is MDYLQIKKSPKLHGEIKISGAKNAALPLIAMSILAKNIVTIKNLPHVADIKTLLKLLSNLGAECSSSWENYSTTINTSTLNQTKATYDIVKTMRASILVLGPILARFGHCEVSLPGGCAIGQRPIDLHLKALEQMGAVINIEAGYIHAIAPDGLKGCNIIFDKITVTGTANIVMAAALAKGVTTITNAAREPEVVQLCEILNASGVKIEGIETAVLTIHGTGGELLEIAPFSVIPDRIEAGTYLCAGAITKSELTLKGANAKHLGAVLSKLEEMGSKFTITDDSITIHPSKIIKHVKIVTQEYPAFPTDMQAQFLALATQADGTSIIEERLFENRFMHVSELQRMGADISLNGNVATVNGHSKLSGTDVMATDLRASSALVLAGLVADGITDVHRIYHLDRGYDSLEKKLQNVGADISRLKE.

Phosphoenolpyruvate is bound at residue 22–23 (KN). UDP-N-acetyl-alpha-D-glucosamine is bound at residue Arg94. Cys118 serves as the catalytic Proton donor. The residue at position 118 (Cys118) is a 2-(S-cysteinyl)pyruvic acid O-phosphothioketal. UDP-N-acetyl-alpha-D-glucosamine-binding positions include 123–127 (RPIDL), Asp309, and Leu331.

The protein belongs to the EPSP synthase family. MurA subfamily.

The protein resides in the cytoplasm. The catalysed reaction is phosphoenolpyruvate + UDP-N-acetyl-alpha-D-glucosamine = UDP-N-acetyl-3-O-(1-carboxyvinyl)-alpha-D-glucosamine + phosphate. Its pathway is cell wall biogenesis; peptidoglycan biosynthesis. In terms of biological role, cell wall formation. Adds enolpyruvyl to UDP-N-acetylglucosamine. The chain is UDP-N-acetylglucosamine 1-carboxyvinyltransferase from Sulfurimonas denitrificans (strain ATCC 33889 / DSM 1251) (Thiomicrospira denitrificans (strain ATCC 33889 / DSM 1251)).